Reading from the N-terminus, the 308-residue chain is Aspartate carbamoyltransferase catalytic subunit (308 aa).

2 residues coordinate carbamoyl phosphate: Arg57 and Thr58. Residue Lys86 participates in L-aspartate binding. Carbamoyl phosphate contacts are provided by Arg107, His135, and Gln138. Arg168 and Arg228 together coordinate L-aspartate. Carbamoyl phosphate-binding residues include Leu267 and Pro268.

This sequence belongs to the aspartate/ornithine carbamoyltransferase superfamily. ATCase family. As to quaternary structure, heterododecamer (2C3:3R2) of six catalytic PyrB chains organized as two trimers (C3), and six regulatory PyrI chains organized as three dimers (R2).

The catalysed reaction is carbamoyl phosphate + L-aspartate = N-carbamoyl-L-aspartate + phosphate + H(+). Its pathway is pyrimidine metabolism; UMP biosynthesis via de novo pathway; (S)-dihydroorotate from bicarbonate: step 2/3. In terms of biological role, catalyzes the condensation of carbamoyl phosphate and aspartate to form carbamoyl aspartate and inorganic phosphate, the committed step in the de novo pyrimidine nucleotide biosynthesis pathway. This is Aspartate carbamoyltransferase catalytic subunit from Leptospira borgpetersenii serovar Hardjo-bovis (strain JB197).